A 205-amino-acid chain; its full sequence is Guanylate kinase (205 aa).

Positions 5–184 (GLLIVLSGPS…AVQKIKGIVE (180 aa)) constitute a Guanylate kinase-like domain. ATP is bound at residue 12-19 (GPSGVGKG).

It belongs to the guanylate kinase family.

Its subcellular location is the cytoplasm. The catalysed reaction is GMP + ATP = GDP + ADP. Functionally, essential for recycling GMP and indirectly, cGMP. This chain is Guanylate kinase, found in Listeria innocua serovar 6a (strain ATCC BAA-680 / CLIP 11262).